The sequence spans 362 residues: tRNA-specific 2-thiouridylase MnmA (362 aa).

Residues 13–20 and M39 each bind ATP; that span reads GLSGGVDS. The interval 99-101 is interaction with target base in tRNA; sequence NPD. Residue C104 is the Nucleophile of the active site. An intrachain disulfide couples C104 to C200. G128 provides a ligand contact to ATP. An interaction with tRNA region spans residues 150-152; that stretch reads KDQ. The active-site Cysteine persulfide intermediate is the C200.

It belongs to the MnmA/TRMU family.

It is found in the cytoplasm. It catalyses the reaction S-sulfanyl-L-cysteinyl-[protein] + uridine(34) in tRNA + AH2 + ATP = 2-thiouridine(34) in tRNA + L-cysteinyl-[protein] + A + AMP + diphosphate + H(+). In terms of biological role, catalyzes the 2-thiolation of uridine at the wobble position (U34) of tRNA, leading to the formation of s(2)U34. This Coxiella burnetii (strain RSA 493 / Nine Mile phase I) protein is tRNA-specific 2-thiouridylase MnmA.